Reading from the N-terminus, the 93-residue chain is DNA-directed RNA polymerase subunit omega (93 aa).

Belongs to the RNA polymerase subunit omega family. In terms of assembly, the RNAP catalytic core consists of 2 alpha, 1 beta, 1 beta' and 1 omega subunit. When a sigma factor is associated with the core the holoenzyme is formed, which can initiate transcription.

The catalysed reaction is RNA(n) + a ribonucleoside 5'-triphosphate = RNA(n+1) + diphosphate. Its function is as follows. Promotes RNA polymerase assembly. Latches the N- and C-terminal regions of the beta' subunit thereby facilitating its interaction with the beta and alpha subunits. This Corynebacterium urealyticum (strain ATCC 43042 / DSM 7109) protein is DNA-directed RNA polymerase subunit omega.